The primary structure comprises 98 residues: Citrate lyase acyl carrier protein (98 aa).

Residue serine 14 is modified to O-(phosphoribosyl dephospho-coenzyme A)serine.

This sequence belongs to the CitD family. In terms of assembly, oligomer with a subunit composition of (alpha,beta,gamma)6.

The protein localises to the cytoplasm. Functionally, covalent carrier of the coenzyme of citrate lyase. In Escherichia coli O81 (strain ED1a), this protein is Citrate lyase acyl carrier protein.